The primary structure comprises 71 residues: uncharacterized protein (71 aa).

Residues 12–34 (GYLSLTLVTLPVCSSLHCYFLWT) traverse the membrane as a helical segment.

The protein resides in the membrane. This is an uncharacterized protein from Dictyostelium discoideum (Social amoeba).